The sequence spans 1001 residues: Non-canonical poly(A) RNA polymerase protein Trf4-1 (1001 aa).

2 stretches are compositionally biased toward low complexity: residues T44–S86 and R127–G163. 2 disordered regions span residues T44–S92 and Q115–A238. Gly residues predominate over residues P164–G178. Positions T179–S216 are enriched in low complexity. Mn(2+)-binding residues include D328 and D330. Positions N458 to G517 constitute a PAP-associated domain. 4 disordered regions span residues P631–H652, Q687–V740, A767–T963, and S977–R1001. Over residues G635–P649 the composition is skewed to basic residues. Composition is skewed to low complexity over residues Q687–Q708 and S768–S788. Over residues V827–G841 the composition is skewed to gly residues. Residues Y844 to G854 are compositionally biased toward polar residues. Positions Y855–H880 are enriched in low complexity. A compositionally biased stretch (basic residues) spans Q881–H912. 2 stretches are compositionally biased toward low complexity: residues S932–S955 and S977–S992.

It belongs to the DNA polymerase type-B-like family. Mn(2+) is required as a cofactor.

It is found in the cytoplasm. It catalyses the reaction RNA(n) + ATP = RNA(n)-3'-adenine ribonucleotide + diphosphate. Involved in a post-transcriptional quality control mechanism limiting inappropriate expression of genetic information. Polyadenylation is required for the degradative activity of the exosome on several of its nuclear RNA substrates. Polyadenylates RNA processing and degradation intermediates of snRNAs and mRNAs. In Drosophila melanogaster (Fruit fly), this protein is Non-canonical poly(A) RNA polymerase protein Trf4-1.